Consider the following 2346-residue polypeptide: MDEPSSLAKPLELNQHSRFIIGSVSEDNSEDEISNLVKLDLLEEKEGSLSPASVSSDTLSDLGISSLQDGLALHMRSSMSGLHLVKQGRDRKKIDSQRDFTVASPAEFVTRFGGNKVIEKVLIANNGIAAVKCMRSIRRWSYEMFRNERAIRFVVMVTPEDLKANAEYIKMADHYVPVPGGPNNNNYANVELILDIAKRIPVQAVWAGWGHASENPKLPELLLKNGIAFMGPPSQAMWALGDKIASSIVAQTAGIPTLPWSGSGLCVDWHENDFSKRILNVPQELYEKGYVKDVDDGLKAAEEVGYPVMIKASEGGGGKGIRKVNNADDFPNLFRQVQAEVPGSPIFVMRLAKQSRHLEVQILADQYGNAISLFGRDCSVQRRHQKIIEEAPAAIATPAVFEHMEQCAVKLARMVGYVSAGTVEYLYSQDGSFYFLELNPRLQVEHPCTEMVADVNLPAAQLQIAMGIPLYRIKDIRMMYGVSPWGDAPIDFENSAHVPCPRGHVIAARITSENPDEGFKPSSGTVQELNFRSNKNVWGYFSVAAAGGLHEFADSQFGHCFSWGENREEAISNMVVALKELSIRGDFRTTVEYLIKLLETESFQLNRIGTGWLDRLIAEKVQAERPDTMLGVVCGALHVADVSLRNSISNFLHSLERGQVLTAHTLLNTVDVELIYEGVKYVLKVTRQSPNSYVVIMNGSCVEVDVHRLSDGGLLLSYDVSSYTTYMKEEVDRYRITIGNKTCVFEKENDPSVLRSPSAGKLIQYIVEDGGHVFAGQCYAEIEVMKMVMTLTAAESGCIHYVKRPGAALDPGCVIAKMQLDNPSKVQQAELHTGSLPRIQSTALRGEKLHRVFHYVLDNLVNVMNGYCLPDPFFSSRVKDWVERLMKTLRDPSLPLLELQDIMTSVSGRIPPNVEKSIKKEMAQYASNITSVLCQFPSQQIANILDSHAATLNRKSEREVFFMNTQSIVQLVQRYRSGIRGHMKAVVMDLLRQYLRVETQFQNGHYDKCVFALREENKSDMNTVLNYIFSHAQVTRKNLLVTMLIDQLCGRGPTLTDELLNILTELTQLSKTTNAKVALRARQVLIASHLPSYELRLNQVESIFLSAIDMYGHQFCIENLQKLILSETSIFDVLPNFFYHSNQVVRMAALEVYVRRAYIAYELNSVQHRQLKDNTCVVEFQFMLPTSHPNRGNIPTLNRMSFSSNLNHYGMTHVASVSDVLLDNAFTPPCQRMGGMVSFRTFEDFVRIFDEVMGCFCDSPPQSPTFPEAGHTSLYDEDKVPRDEPIHILNVAIKTDCDIEDDSLAAMFREFTQQNKATLVEHGIRRLTFLVAQKDFRKQVNYEVDQRFHREFPKFFTFRARDKFEEDRIYRHLEPALAFQLELNRMRNFDLTAIPCANHKMHLYLGAAKVEVGTEVTDYRFFVRAIIRHSDLVTKEASFEYLQNEGERLLLEAMDELEVAFNNTNVRTDCNHIFLNFVPTVIMDPSKIEESVRSMVMRYGSRLWKLRVLQAELKINIRLTPTGKAIPIRLFLTNESGYYLDISLYKEVTDSRTAQIMFQAYGDKQGPLHGMLINTPYVTKDQLQSKRFQAQSLGTTYIYDIPEMFRQSLIKLWESMSSQAFLPPPPLPSDILTYTELVLDDQGQLVHMNRLPGGNEIGMVAWKMTLKSPEYPDGRDIIVIGNDITYRIGSFGPQEDLLFLRASELARAEGIPRIYVAANSGARIGLAEEIRHMFHVAWVDPEDPYKGYKYLYLTPQDYKRVSALNSVHCEHVEDEGESRYKITDIIGKEEGLGAENLRGSGMIAGESSLAYDEIITISLVTCRAIGIGAYLVRLGQRTIQVENSHLILTGAGALNKVLGREVYTSNNQLGGIQIMHNNGVTHSTVCDDFEGVFTVLHWLSYMPKSVYSSVPLLNSKDPIDRVIEFVPTKAPYDPRWMLAGRPHPTQKGQWLSGFFDYGSFSEIMQPWAQTVVVGRARLGGIPVGVVAVETRTVELSIPADPANLDSEAKIIQQAGQVWFPDSAFKTYQAIKDFNREGLPLMVFANWRGFSGGMKDMYDQVLKFGAYIVDGLRECSQPVMVYIPPQAELRGGSWVVIDPTINPRHMEMYADRESRGSVLEPEGTVEIKFRRKDLVKTMRRVDPVYIHLAERLGTPELSVAERKELESKLKEREEFLLPIYHQVAVQFADLHDTPGRMQEKGVINDILDWKTSRTFFYWRLRRLLLEDLVKKKIHNANPELTDGQIQAMLRRWFVEVEGTVKAYVWDNNKDLVEWLEKQLTEEDGVRSVIEENIKYISRDYVLKQIRSLVQANPEVAMDSIVHMTQHISPTQRAEVVRILSTMDSPST.

Position 1 is an N-acetylmethionine (Met-1). Residues Ser-5, Ser-23, Ser-25, Ser-29, Ser-34, Ser-48, Ser-50, and Ser-53 each carry the phosphoserine modification. Thr-58 is subject to Phosphothreonine. A Phosphoserine modification is found at Ser-78. Ser-80 is modified (phosphoserine; by AMPK). The region spanning 117-618 (VIEKVLIANN…GTGWLDRLIA (502 aa)) is the Biotin carboxylation domain. One can recognise an ATP-grasp domain in the interval 275–466 (SKRILNVPQE…LPAAQLQIAM (192 aa)). Position 315–320 (315–320 (GGGGKG)) interacts with ATP. Mg(2+) is bound by residues Glu-424, Glu-437, and Asn-439. Mn(2+) is bound by residues Glu-424, Glu-437, and Asn-439. Arg-441 is an active-site residue. Phosphothreonine is present on Thr-610. A Biotinyl-binding domain is found at 745 to 819 (FEKENDPSVL…DPGCVIAKMQ (75 aa)). Lys-786 carries the post-translational modification N6-biotinyllysine. Ser-835, Ser-1201, Ser-1216, and Ser-1218 each carry phosphoserine. The residue at position 1227 (Thr-1227) is a Phosphothreonine. Phosphoserine is present on residues Ser-1259, Ser-1263, and Ser-1273. Lys-1334 is modified (N6-acetyllysine). Residues 1576–1914 (PYVTKDQLQS…SVYSSVPLLN (339 aa)) form the CoA carboxyltransferase N-terminal domain. Positions 1576 to 2234 (PYVTKDQLQS…EDLVKKKIHN (659 aa)) are carboxyltransferase. Residues Arg-1823, Lys-2127, and Arg-2129 each coordinate CoA. The CoA carboxyltransferase C-terminal domain maps to 1918–2234 (PIDRVIEFVP…EDLVKKKIHN (317 aa)). Thr-2153 bears the Phosphothreonine mark.

In terms of assembly, monomer, homodimer, and homotetramer. Can form filamentous polymers. Interacts in its inactive phosphorylated form with the BRCT domains of BRCA1 which prevents ACACA dephosphorylation and inhibits lipid synthesis. Interacts with MID1IP1; interaction with MID1IP1 promotes oligomerization and increases its activity. It depends on Mg(2+) as a cofactor. Mn(2+) is required as a cofactor. Biotin serves as cofactor. Post-translationally, phosphorylation on Ser-1263 is required for interaction with BRCA1. In terms of processing, phosphorylation at Ser-80 by AMPK inactivates enzyme activity. The biotin cofactor is covalently attached to the central biotinyl-binding domain and is required for the catalytic activity.

The protein resides in the cytoplasm. The protein localises to the cytosol. The catalysed reaction is hydrogencarbonate + acetyl-CoA + ATP = malonyl-CoA + ADP + phosphate + H(+). It functions in the pathway lipid metabolism; malonyl-CoA biosynthesis; malonyl-CoA from acetyl-CoA: step 1/1. Its activity is regulated as follows. Inhibited by phosphorylation. Citrate promotes oligomerization of the protein into filaments that correspond to the most active form of the carboxylase. Cytosolic enzyme that catalyzes the carboxylation of acetyl-CoA to malonyl-CoA, the first and rate-limiting step of de novo fatty acid biosynthesis. This is a 2 steps reaction starting with the ATP-dependent carboxylation of the biotin carried by the biotin carboxyl carrier (BCC) domain followed by the transfer of the carboxyl group from carboxylated biotin to acetyl-CoA. The protein is Acetyl-CoA carboxylase 1 of Bos taurus (Bovine).